Here is a 956-residue protein sequence, read N- to C-terminus: MAM domain-containing glycosylphosphatidylinositol anchor protein 1 (956 aa).

The signal sequence occupies residues 1–18; it reads MEVTCLLLLALIPFHCRG. 2 Ig-like domains span residues 24-123 and 132-230; these read PAQA…KSIR and PVLT…KAIT. N-linked (GlcNAc...) asparagine glycosylation is present at Asn42. 2 disulfide bridges follow: Cys60-Cys108 and Cys157-Cys214. N-linked (GlcNAc...) asparagine glycosylation is found at Asn235, Asn247, Asn257, and Asn307. 4 consecutive Ig-like domains span residues 240–323, 338–432, 440–532, and 539–650; these read PALK…KTVN, PDMI…IEVN, PTIS…AQVQ, and PEVE…PTRS. Intrachain disulfides connect Cys262-Cys308 and Cys357-Cys415. An N-linked (GlcNAc...) asparagine glycan is attached at Asn432. Disulfide bonds link Cys463–Cys514 and Cys560–Cys616. The Fibronectin type-III domain occupies 627–744; the sequence is CLFQVSAKAY…SRIIHYTEPI (118 aa). The region spanning 752–919 is the MAM domain; sequence NTCHFEDEKI…VTLKKGECPR (168 aa). Positions 780–789 are enriched in polar residues; sequence LTQNPKRSPN. The disordered stretch occupies residues 780–799; sequence LTQNPKRSPNTGPPTDISGT. A lipid anchor (GPI-anchor amidated serine) is attached at Ser933. The propeptide at 934-956 is removed in mature form; the sequence is GAPRLSSLQLWGSMAIFLLALQR.

Interacts heterophilically through its MAM domain with proteins in axon-rich regions and through its Ig-like domains with proteins in differentiating muscle. Interacts (through the Ig-like domains) with NLGN2. Expressed by neurons in layers 2 and 3 of the cortex during their migration and settling in the cortical plate. Also found in layers 4 and 6a. From 9.5 dpc-13.5 dpc, detected in the marginal zone of the developing cortex. At 16.5 dpc, modest expression is found in the intermediate zone. At postnatal day 1, evident in the superficial cortical plate. By postnatal day 7, expression is limited to layers 2 and 3 throughout most of the cortex.

The protein localises to the cell membrane. Functionally, required for radial migration of cortical neurons in the superficial layer of the neocortex. Plays a role in the formation or maintenance of inhibitory synapses. May function by inhibiting the activity of NLGN2. The polypeptide is MAM domain-containing glycosylphosphatidylinositol anchor protein 1 (Mus musculus (Mouse)).